Consider the following 182-residue polypeptide: Succinate dehydrogenase [ubiquinone] cytochrome b small subunit, mitochondrial (182 aa).

The Mitochondrial matrix portion of the chain corresponds to 1-71 (MSLSLLLRGA…SAPRMASAGS (71 aa)). A helical transmembrane segment spans residues 72-96 (SHTLLWTVERIVSAGLLAVIPAAFI). The Mitochondrial intermembrane segment spans residues 97–101 (APSQV). Residues 102–122 (LDALMAISVVIHTHWGVEAMV) form a helical membrane-spanning segment. H113 provides a ligand contact to heme. Over 123–135 (VDYMRPSVVGNVL) the chain is Mitochondrial matrix. An a ubiquinone-binding site is contributed by Y125. Residues 136-157 (PKVAHIALIIISVATLGGLFYF) form a helical membrane-spanning segment. Topologically, residues 158-182 (IQNDVGLANGIKRFWAIKGKDAEKA) are mitochondrial intermembrane.

It belongs to the CybS family. Forms part of complex II containing four subunits: a flavoprotein (FP), an iron-sulfur protein (IP) and a cytochrome b composed of a large and a small subunit.

The protein resides in the mitochondrion inner membrane. The protein operates within carbohydrate metabolism; tricarboxylic acid cycle. Membrane-anchoring subunit of succinate dehydrogenase (SDH) that is involved in complex II of the mitochondrial electron transport chain and is responsible for transferring electrons from succinate to ubiquinone (coenzyme Q). The polypeptide is Succinate dehydrogenase [ubiquinone] cytochrome b small subunit, mitochondrial (Drosophila melanogaster (Fruit fly)).